Consider the following 327-residue polypeptide: GTP 3',8-cyclase (327 aa).

Residues 7 to 232 (HHDRQFRYLR…IKRDRTAGPA (226 aa)) form the Radical SAM core domain. GTP is bound at residue Arg16. [4Fe-4S] cluster contacts are provided by Cys23 and Cys27. S-adenosyl-L-methionine is bound at residue Tyr29. A [4Fe-4S] cluster-binding site is contributed by Cys30. Arg66 serves as a coordination point for GTP. Residue Gly70 participates in S-adenosyl-L-methionine binding. A GTP-binding site is contributed by Thr97. Ser121 is an S-adenosyl-L-methionine binding site. Lys158 is a binding site for GTP. S-adenosyl-L-methionine is bound at residue Met192. [4Fe-4S] cluster is bound by residues Cys255 and Cys258. 260-262 (RLR) provides a ligand contact to GTP. Cys272 is a [4Fe-4S] cluster binding site.

It belongs to the radical SAM superfamily. MoaA family. Monomer and homodimer. [4Fe-4S] cluster is required as a cofactor.

It carries out the reaction GTP + AH2 + S-adenosyl-L-methionine = (8S)-3',8-cyclo-7,8-dihydroguanosine 5'-triphosphate + 5'-deoxyadenosine + L-methionine + A + H(+). It functions in the pathway cofactor biosynthesis; molybdopterin biosynthesis. Catalyzes the cyclization of GTP to (8S)-3',8-cyclo-7,8-dihydroguanosine 5'-triphosphate. In Synechococcus elongatus (strain ATCC 33912 / PCC 7942 / FACHB-805) (Anacystis nidulans R2), this protein is GTP 3',8-cyclase.